A 382-amino-acid chain; its full sequence is Pyrimidine monooxygenase RutA (382 aa).

Residues 68 to 69 (IK), Asn-134, Glu-143, 159 to 160 (RY), and Ser-209 contribute to the FMN site.

It belongs to the NtaA/SnaA/DszA monooxygenase family. RutA subfamily.

It carries out the reaction uracil + FMNH2 + NADH + O2 = (Z)-3-ureidoacrylate + FMN + NAD(+) + H2O + H(+). The enzyme catalyses thymine + FMNH2 + NADH + O2 = (Z)-2-methylureidoacrylate + FMN + NAD(+) + H2O + H(+). In terms of biological role, catalyzes the pyrimidine ring opening between N-3 and C-4 by an unusual flavin hydroperoxide-catalyzed mechanism, adding oxygen atoms in the process to yield ureidoacrylate peracid, that immediately reacts with FMN forming ureidoacrylate and FMN-N(5)-oxide. The FMN-N(5)-oxide reacts spontaneously with NADH to produce FMN. Requires the flavin reductase RutF to regenerate FMN in vivo. The protein is Pyrimidine monooxygenase RutA of Shigella flexneri serotype X (strain 2002017).